Here is an 84-residue protein sequence, read N- to C-terminus: Alpha-mammal toxin Ts2 (84 aa).

An N-terminal signal peptide occupies residues 1–20; the sequence is MKGFLLFISILMMIGTIVVG. Residues 21–83 form the LCN-type CS-alpha/beta domain; sequence KEGYAMDHEG…VWDYATNKCG (63 aa). 4 disulfide bridges follow: Cys31–Cys82, Cys35–Cys58, Cys43–Cys63, and Cys47–Cys65. Cys82 is modified (cysteine amide).

This sequence belongs to the long (4 C-C) scorpion toxin superfamily. Sodium channel inhibitor family. Beta subfamily. Expressed by the venom gland.

The protein resides in the secreted. Its function is as follows. Alpha toxins bind voltage-independently at site-3 of sodium channels (Nav) and inhibit the inactivation of the activated channels, thereby blocking neuronal transmission. This toxin acts on Nav1.2/SCN2A, Nav1.3/SCN3A, Nav1.5/SCN5A, Nav1.6/SCN8A and Nav1.7/SCN9A voltage-gated sodium channels, with the highest affinity for Nav1.3/SCN3A, followed by Nav1.6/SCN8A and Nav1.7/SCN9A which are affected almost equally. Interestingly, shows a significant shift of the voltage dependence of activation for Nav1.3/SCN3A that is characteristic of beta-toxins. In addition, in presence of LPS, this toxin inhibits the release of NO, IL-6 and TNF-alpha in J774.1 cells. Further, in the absence of LPS, it stimulates the production of the anti-inflammatory cytokine IL-10. This toxin is active on mammals. The chain is Alpha-mammal toxin Ts2 from Tityus serrulatus (Brazilian scorpion).